Reading from the N-terminus, the 201-residue chain is 3-isopropylmalate dehydratase small subunit (201 aa).

The protein belongs to the LeuD family. LeuD type 1 subfamily. In terms of assembly, heterodimer of LeuC and LeuD.

It catalyses the reaction (2R,3S)-3-isopropylmalate = (2S)-2-isopropylmalate. It participates in amino-acid biosynthesis; L-leucine biosynthesis; L-leucine from 3-methyl-2-oxobutanoate: step 2/4. Its function is as follows. Catalyzes the isomerization between 2-isopropylmalate and 3-isopropylmalate, via the formation of 2-isopropylmaleate. The sequence is that of 3-isopropylmalate dehydratase small subunit from Roseobacter denitrificans (strain ATCC 33942 / OCh 114) (Erythrobacter sp. (strain OCh 114)).